Reading from the N-terminus, the 70-residue chain is MTSVKTIAMLAMLVIVAALIYMGYRTFTSMQSKLNELESRVNAPQLRPPVMSPIVPLNFIESEDLDKELD.

A helical transmembrane segment spans residues 4–24 (VKTIAMLAMLVIVAALIYMGY).

It localises to the host membrane. This is an uncharacterized protein from Dryophytes versicolor (chameleon treefrog).